Consider the following 232-residue polypeptide: 7-cyano-7-deazaguanine synthase (232 aa).

7-17 is an ATP binding site; sequence CSGGLDSVSLA. Zn(2+) is bound by residues Cys-185, Cys-193, Cys-196, and Cys-199.

The protein belongs to the QueC family. It depends on Zn(2+) as a cofactor.

The enzyme catalyses 7-carboxy-7-deazaguanine + NH4(+) + ATP = 7-cyano-7-deazaguanine + ADP + phosphate + H2O + H(+). Its pathway is purine metabolism; 7-cyano-7-deazaguanine biosynthesis. Functionally, catalyzes the ATP-dependent conversion of 7-carboxy-7-deazaguanine (CDG) to 7-cyano-7-deazaguanine (preQ(0)). This Brucella canis (strain ATCC 23365 / NCTC 10854 / RM-666) protein is 7-cyano-7-deazaguanine synthase.